A 238-amino-acid polypeptide reads, in one-letter code: Large ribosomal subunit protein uL1 (238 aa).

The segment at 217-238 (TNGPGVPVDETIQKNYADDAEA) is disordered.

This sequence belongs to the universal ribosomal protein uL1 family. In terms of assembly, part of the 50S ribosomal subunit.

In terms of biological role, binds directly to 23S rRNA. The L1 stalk is quite mobile in the ribosome, and is involved in E site tRNA release. Its function is as follows. Protein L1 is also a translational repressor protein, it controls the translation of the L11 operon by binding to its mRNA. The sequence is that of Large ribosomal subunit protein uL1 from Corynebacterium urealyticum (strain ATCC 43042 / DSM 7109).